We begin with the raw amino-acid sequence, 471 residues long: Secretogranin-3 (471 aa).

The first 22 residues, 1-22, serve as a signal peptide directing secretion; it reads MGFLWTGSWILVLVLNSGPIQA. Disordered stretches follow at residues 24 to 45, 89 to 108, and 345 to 404; these read PKPEGSQDKSLHNRELSAERPL, TVEKERQSIRSPPFDNQLNV, and KLEK…TDEA. Over residues 28–45 the composition is skewed to basic and acidic residues; sequence GSQDKSLHNRELSAERPL. Serine 40 is subject to Phosphoserine. An O-linked (Xyl...) (chondroitin sulfate) serine glycan is attached at serine 40. 2 stretches are compositionally biased toward basic and acidic residues: residues 345-355 and 364-404; these read KLEKNTTDSKS and KSQE…TDEA. The residue at position 365 (serine 365) is a Phosphoserine.

Interacts with CHGA. Interacts with secretogranin II/SCG2. Interacts (via C-terminus) with CPE. In terms of tissue distribution, expressed in various brain areas, with highest levels in the arcuate nucleus and the lateral hypothalamic area, as well as the paraventricular nucleus and the ventromedial hypothalamus (at protein level).

The protein resides in the cytoplasmic vesicle. Its subcellular location is the secretory vesicle. It localises to the secretory vesicle membrane. It is found in the secreted. Member of the granin protein family that regulates the biogenesis of secretory granules. Acts as a sorting receptor for intragranular proteins including chromogranin A/CHGA. May also play a role in angiogenesis. Promotes endothelial proliferation, migration and tube formation through MEK/ERK signaling pathway. The chain is Secretogranin-3 (Scg3) from Mus musculus (Mouse).